Consider the following 185-residue polypeptide: Kappa-casein (185 aa).

Residues 1–20 form the signal peptide; sequence MKSFFLVVNILALTLPFLGA. Threonine 143 carries O-linked (GalNAc...) threonine glycosylation. Phosphoserine; alternate is present on serine 161. Serine 161 carries O-linked (GalNAc...) serine; alternate glycosylation. Threonine 178 carries O-linked (GalNAc...) threonine glycosylation. Phosphoserine is present on serine 179.

The protein belongs to the kappa-casein family. Mammary gland specific. Secreted in milk.

The protein localises to the secreted. Its function is as follows. Kappa-casein stabilizes micelle formation, preventing casein precipitation in milk. This is Kappa-casein (CSN3) from Equus caballus (Horse).